A 311-amino-acid chain; its full sequence is Ornithine carbamoyltransferase (311 aa).

Carbamoyl phosphate contacts are provided by residues 57–60, glutamine 84, arginine 108, and 135–138; these read STRT and HPCQ. Residues asparagine 166, aspartate 230, and 234–235 each bind L-ornithine; that span reads SM. Carbamoyl phosphate is bound by residues 270-271 and arginine 298; that span reads CL.

It belongs to the aspartate/ornithine carbamoyltransferase superfamily. OTCase family.

It localises to the cytoplasm. It catalyses the reaction carbamoyl phosphate + L-ornithine = L-citrulline + phosphate + H(+). The protein operates within amino-acid biosynthesis; L-arginine biosynthesis; L-arginine from L-ornithine and carbamoyl phosphate: step 1/3. In terms of biological role, reversibly catalyzes the transfer of the carbamoyl group from carbamoyl phosphate (CP) to the N(epsilon) atom of ornithine (ORN) to produce L-citrulline. In Carboxydothermus hydrogenoformans (strain ATCC BAA-161 / DSM 6008 / Z-2901), this protein is Ornithine carbamoyltransferase.